Here is a 155-residue protein sequence, read N- to C-terminus: Interleukin-2 (155 aa).

Residues M1–G20 form the signal peptide. O-linked (GalNAc...) threonine glycosylation is present at T23. C79 and C127 form a disulfide bridge.

It belongs to the IL-2 family.

The protein localises to the secreted. Functionally, cytokine produced by activated CD4-positive helper T-cells and to a lesser extend activated CD8-positive T-cells and natural killer (NK) cells that plays pivotal roles in the immune response and tolerance. Binds to a receptor complex composed of either the high-affinity trimeric IL-2R (IL2RA/CD25, IL2RB/CD122 and IL2RG/CD132) or the low-affinity dimeric IL-2R (IL2RB and IL2RG). Interaction with the receptor leads to oligomerization and conformation changes in the IL-2R subunits resulting in downstream signaling starting with phosphorylation of JAK1 and JAK3. In turn, JAK1 and JAK3 phosphorylate the receptor to form a docking site leading to the phosphorylation of several substrates including STAT5. This process leads to activation of several pathways including STAT, phosphoinositide-3-kinase/PI3K and mitogen-activated protein kinase/MAPK pathways. Functions as a T-cell growth factor and can increase NK-cell cytolytic activity as well. Promotes strong proliferation of activated B-cells and subsequently immunoglobulin production. Plays a pivotal role in regulating the adaptive immune system by controlling the survival and proliferation of regulatory T-cells, which are required for the maintenance of immune tolerance. Moreover, participates in the differentiation and homeostasis of effector T-cell subsets, including Th1, Th2, Th17 as well as memory CD8-positive T-cells. The chain is Interleukin-2 (IL2) from Bubalus bubalis (Domestic water buffalo).